The sequence spans 294 residues: N-acetylmuramic acid 6-phosphate etherase (294 aa).

One can recognise an SIS domain in the interval 54 to 217 (VIQSFEEEGR…STASMIGVGK (164 aa)). Catalysis depends on E82, which acts as the Proton donor. The active site involves E113.

It belongs to the GCKR-like family. MurNAc-6-P etherase subfamily. As to quaternary structure, homodimer.

The catalysed reaction is N-acetyl-D-muramate 6-phosphate + H2O = N-acetyl-D-glucosamine 6-phosphate + (R)-lactate. Its pathway is amino-sugar metabolism; N-acetylmuramate degradation. In terms of biological role, specifically catalyzes the cleavage of the D-lactyl ether substituent of MurNAc 6-phosphate, producing GlcNAc 6-phosphate and D-lactate. The sequence is that of N-acetylmuramic acid 6-phosphate etherase from Bacillus cereus (strain 03BB102).